The following is a 222-amino-acid chain: Pleckstrin homology domain-containing family B member 2 (222 aa).

The PH domain occupies 2–109 (AFVKSGWLLR…WKFTLQDSRT (108 aa)). Lysine 20 lines the a 1,2-diacyl-sn-glycero-3-phospho-L-serine pocket.

The protein resides in the recycling endosome membrane. Involved in retrograde transport of recycling endosomes. The protein is Pleckstrin homology domain-containing family B member 2 (PLEKHB2) of Pongo abelii (Sumatran orangutan).